A 156-amino-acid chain; its full sequence is Small ribosomal subunit protein uS7 (156 aa).

This sequence belongs to the universal ribosomal protein uS7 family. Part of the 30S ribosomal subunit. Contacts proteins S9 and S11.

One of the primary rRNA binding proteins, it binds directly to 16S rRNA where it nucleates assembly of the head domain of the 30S subunit. Is located at the subunit interface close to the decoding center, probably blocks exit of the E-site tRNA. The sequence is that of Small ribosomal subunit protein uS7 from Clostridium perfringens (strain ATCC 13124 / DSM 756 / JCM 1290 / NCIMB 6125 / NCTC 8237 / Type A).